Reading from the N-terminus, the 268-residue chain is Proenkephalin-A (268 aa).

The signal sequence occupies residues 1 to 24; it reads MARFLRLCTWLLVLGSCLLATVQA. 3 disulfides stabilise this stretch: Cys-26–Cys-48, Cys-30–Cys-52, and Cys-33–Cys-65. Residues 162 to 185 form a disordered region; sequence GTGDNRAREGRHQESTDNDDNMSK. The segment covering 166–176 has biased composition (basic and acidic residues); that stretch reads NRAREGRHQES. Propeptides lie at residues 197 to 208 and 218 to 228; these read SPQVEDEAKELQ and VGRPEWWMDYQ. Ser-252 is modified (phosphoserine).

The protein belongs to the opioid neuropeptide precursor family. Post-translationally, proenkephalin-A is cleaved by CTSL to generate Met-enkephalin. Processed and degraded by ACE. In terms of processing, probably cleaved by ACE. Post-translationally, processed by ACE to generate Met-enkephalin in the nucleus accumbens of the brain. The N-terminal domain contains 6 conserved cysteines thought to be involved in disulfide bonding and/or processing.

The protein localises to the cytoplasmic vesicle. It is found in the secretory vesicle. The protein resides in the chromaffin granule lumen. It localises to the secreted. Neuropeptide that competes with and mimic the effects of opiate drugs. They play a role in a number of physiologic functions, including pain perception and responses to stress. Functionally, met-enkephalin-Arg-Phe neuropeptide acts as a strong ligand of Mu-type opioid receptor OPRM1. Met-enkephalin-Arg-Phe-binding to OPRM1 in the nucleus accumbens of the brain increases activation of OPRM1, leading to long-term synaptic depression of glutamate release. Its function is as follows. Increases glutamate release in the striatum and decreases GABA concentration in the striatum. In terms of biological role, increases glutamate release in the striatum. The sequence is that of Proenkephalin-A (PENK) from Mesocricetus auratus (Golden hamster).